Here is an 89-residue protein sequence, read N- to C-terminus: Small ribosomal subunit protein bS20 (89 aa).

The protein belongs to the bacterial ribosomal protein bS20 family.

Its function is as follows. Binds directly to 16S ribosomal RNA. The polypeptide is Small ribosomal subunit protein bS20 (Stenotrophomonas maltophilia (strain R551-3)).